Here is a 245-residue protein sequence, read N- to C-terminus: 1-acyl-sn-glycerol-3-phosphate acyltransferase (245 aa).

At methionine 1 the chain carries N-formylmethionine. Residues 73 to 78 (HQNNYD) carry the HXXXXD motif motif.

The protein belongs to the 1-acyl-sn-glycerol-3-phosphate acyltransferase family.

The protein localises to the cell inner membrane. The catalysed reaction is a 1-acyl-sn-glycero-3-phosphate + an acyl-CoA = a 1,2-diacyl-sn-glycero-3-phosphate + CoA. The enzyme catalyses a fatty acyl-[ACP] + a 1-acyl-sn-glycero-3-phosphate = a 1,2-diacyl-sn-glycero-3-phosphate + holo-[ACP]. Its pathway is phospholipid metabolism; CDP-diacylglycerol biosynthesis; CDP-diacylglycerol from sn-glycerol 3-phosphate: step 2/3. Converts lysophosphatidic acid (LPA) into phosphatidic acid by incorporating an acyl moiety at the 2 position. This enzyme can utilize either acyl-CoA or acyl-ACP as the fatty acyl donor. This chain is 1-acyl-sn-glycerol-3-phosphate acyltransferase (plsC), found in Escherichia coli (strain K12).